A 530-amino-acid chain; its full sequence is Cytochrome P450 2U1 (530 aa).

Helical transmembrane passes span 21–41, 99–119, 247–267, and 328–348; these read VRAT…GWVW, VYGN…LSDF, ICLH…YLPF, and LFYI…NSLL. C476 is a binding site for heme. The helical transmembrane segment at 481–501 threads the bilayer; the sequence is LAKMELFLMFVSLMQTFTFAL.

This sequence belongs to the cytochrome P450 family. Requires heme as cofactor. Widely expressed. Expressed in heart, brain and liver.

The protein resides in the endoplasmic reticulum membrane. Its subcellular location is the microsome membrane. It is found in the mitochondrion inner membrane. It carries out the reaction an omega-methyl-long-chain fatty acid + reduced [NADPH--hemoprotein reductase] + O2 = an omega-hydroxy-long-chain fatty acid + oxidized [NADPH--hemoprotein reductase] + H2O + H(+). It catalyses the reaction (5Z,8Z,11Z,14Z)-eicosatetraenoate + reduced [NADPH--hemoprotein reductase] + O2 = 19-hydroxy-(5Z,8Z,11Z,14Z)-eicosatetraenoate + oxidized [NADPH--hemoprotein reductase] + H2O + H(+). The catalysed reaction is (5Z,8Z,11Z,14Z)-eicosatetraenoate + reduced [NADPH--hemoprotein reductase] + O2 = 20-hydroxy-(5Z,8Z,11Z,14Z)-eicosatetraenoate + oxidized [NADPH--hemoprotein reductase] + H2O + H(+). The enzyme catalyses N-[(5Z,8Z,11Z,14Z)-eicosatetraenoyl]-serotonin + reduced [NADPH--hemoprotein reductase] + O2 = 2-oxo-N-[(5Z,8Z,11Z,14Z)-eicosatetraenoyl]-serotonin + oxidized [NADPH--hemoprotein reductase] + H2O + H(+). Functionally, a cytochrome P450 monooxygenase involved in the metabolism of arachidonic acid and its conjugates. Mechanistically, uses molecular oxygen inserting one oxygen atom into a substrate, and reducing the second into a water molecule, with two electrons provided by NADPH via cytochrome P450 reductase (CPR; NADPH-ferrihemoprotein reductase). Acts as an omega and omega-1 hydroxylase for arachidonic acid and possibly for other long chain fatty acids. May modulate the arachidonic acid signaling pathway and play a role in other fatty acid signaling processes. May down-regulate the biological activities of N-arachidonoyl-serotonin, an endocannabinoid that has anti-nociceptive effects through inhibition of fatty acid amide hydrolase FAAH, TRPV1 receptor and T-type calcium channels. Catalyzes C-2 oxidation of the indole ring of N-arachidonoyl-serotonin forming a less active product 2-oxo-N-arachidonoyl-serotonin. The sequence is that of Cytochrome P450 2U1 from Mus musculus (Mouse).